The sequence spans 93 residues: Large ribosomal subunit protein uL23 (93 aa).

The protein belongs to the universal ribosomal protein uL23 family. In terms of assembly, part of the 50S ribosomal subunit. Contacts protein L29, and trigger factor when it is bound to the ribosome.

Functionally, one of the early assembly proteins it binds 23S rRNA. One of the proteins that surrounds the polypeptide exit tunnel on the outside of the ribosome. Forms the main docking site for trigger factor binding to the ribosome. This is Large ribosomal subunit protein uL23 from Campylobacter lari (strain RM2100 / D67 / ATCC BAA-1060).